Reading from the N-terminus, the 309-residue chain is Acetylglutamate kinase (309 aa).

Substrate contacts are provided by residues 69 to 70, Arg-91, and Asn-194; that span reads GG.

Belongs to the acetylglutamate kinase family. ArgB subfamily.

It localises to the cytoplasm. The catalysed reaction is N-acetyl-L-glutamate + ATP = N-acetyl-L-glutamyl 5-phosphate + ADP. The protein operates within amino-acid biosynthesis; L-arginine biosynthesis; N(2)-acetyl-L-ornithine from L-glutamate: step 2/4. Catalyzes the ATP-dependent phosphorylation of N-acetyl-L-glutamate. The protein is Acetylglutamate kinase of Vesicomyosocius okutanii subsp. Calyptogena okutanii (strain HA).